A 219-amino-acid polypeptide reads, in one-letter code: Leukocyte surface antigen CD53 (219 aa).

The Cytoplasmic portion of the chain corresponds to 1–11 (MGMSSLKLLKF). Residues 12-32 (VLFFFNLIFWFCGCCILGLGI) traverse the membrane as a helical segment. The Extracellular portion of the chain corresponds to 33–54 (YLLIHSKFGVLFHNLPSLTLGN). A helical transmembrane segment spans residues 55 to 69 (VLVIVGSVIMVVAFL). Topologically, residues 70 to 80 (GCMGSIKENKC) are cytoplasmic. Residues 81 to 106 (LLMSFFVLLLIILLAEVTLAILLFVY) form a helical membrane-spanning segment. Topologically, residues 107–181 (EQKLKEYVAE…IQAKQWFHSN (75 aa)) are extracellular. N-linked (GlcNAc...) asparagine glycosylation is found at Asn-129 and Asn-148. The helical transmembrane segment at 182–206 (FLYIGITTICVCVIQVLGMSFALTL) threads the bilayer. Over 207-219 (NCQIDKTSQVLGL) the chain is Cytoplasmic.

This sequence belongs to the tetraspanin (TM4SF) family. In terms of assembly, interacts with SCIMP. Interacts with CD45/PTPRC. Interacts with IL7R. Interacts with RBL2 and PPP2CA.

Its subcellular location is the cell membrane. It localises to the cell junction. The protein resides in the membrane. The protein localises to the synapse. In terms of biological role, structural component of specialized membrane microdomains known as tetraspanin-enriched microdomains (TERMs), which act as platforms for receptor clustering and signaling. Participates thereby in diverse biological functions such as cell signal transduction, adhesion, migration and protein trafficking. Plays a role in the activation of monocytes and B-cells. Acts as an essential regulator of B-cell development by promoting interleukin-7 receptor/IL7R signaling. Also promotes, in B-cells, the BCR signaling by recruiting PKC to the plasma membrane in order to phosphorylate its substrates. Plays an essential role in B- and T-cells homing to lymph nodes by stabilizing L-selectin/SELL cell surface expression. Also mediates metabolic and inflammatory functions in hepatocytes and adipose tissue by promoting TNF-alpha and LPS signaling independent of the immune compartment. This chain is Leukocyte surface antigen CD53 (CD53), found in Bos taurus (Bovine).